A 413-amino-acid chain; its full sequence is ORC1-type DNA replication protein 2 (413 aa).

ATP is bound by residues threonine 70–alanine 74, tyrosine 217, and arginine 229.

The protein belongs to the CDC6/cdc18 family. In terms of assembly, monomer. Interacts with Cdc6-3, MCM and PolB1. Post-translationally, autophosphorylated in vitro.

Functionally, involved in regulation of DNA replication. May play essential roles in origin recognition and cell cycle control of replication. Binds both single-stranded and double-stranded DNA, with a preference for molecules that contain a bubble, a fork, or a tail. Has a weak ATPase activity. Stimulates the binding of the MCM helicase to the origin DNA, but strongly inhibits ATPase and DNA helicase activities of MCM. Also regulates the DNA polymerase and the nuclease activities of PolB1. In Saccharolobus solfataricus (strain ATCC 35092 / DSM 1617 / JCM 11322 / P2) (Sulfolobus solfataricus), this protein is ORC1-type DNA replication protein 2 (cdc6-2).